The sequence spans 147 residues: MADFDAVLKCWGPVEADYTTMGGLVLTRLFKEHPETQKLFPKFAGIAQADIAGNAAISAHGATVLKKLGELLKAKGSHAAILKPLANSHATKHKIPINNFKLISEVLVKVMHEKAGLDAGGQTALRNVMGIIIADLEANYKELGFSG.

A2 is subject to N-acetylalanine. The 140-residue stretch at 2–141 folds into the Globin domain; it reads ADFDAVLKCW…IIADLEANYK (140 aa). Nitrite is bound at residue H60. H60 is a binding site for O2. Residue H89 coordinates heme b.

This sequence belongs to the globin family. Monomeric.

Its subcellular location is the cytoplasm. It localises to the sarcoplasm. The catalysed reaction is Fe(III)-heme b-[protein] + nitric oxide + H2O = Fe(II)-heme b-[protein] + nitrite + 2 H(+). It catalyses the reaction H2O2 + AH2 = A + 2 H2O. In terms of biological role, monomeric heme protein which primary function is to store oxygen and facilitate its diffusion within muscle tissues. Reversibly binds oxygen through a pentacoordinated heme iron and enables its timely and efficient release as needed during periods of heightened demand. Depending on the oxidative conditions of tissues and cells, and in addition to its ability to bind oxygen, it also has a nitrite reductase activity whereby it regulates the production of bioactive nitric oxide. Under stress conditions, like hypoxia and anoxia, it also protects cells against reactive oxygen species thanks to its pseudoperoxidase activity. The sequence is that of Myoglobin (mb) from Thunnus albacares (Yellowfin tuna).